Consider the following 371-residue polypeptide: Aspartate-semialdehyde dehydrogenase (371 aa).

NADP(+) is bound by residues 11 to 14, 38 to 39, and glutamine 75; these read RGMV and TS. Position 104 (arginine 104) interacts with phosphate. The Acyl-thioester intermediate role is filled by cysteine 137. Residue glutamine 164 coordinates substrate. 167–168 lines the NADP(+) pocket; the sequence is SG. Residue glutamate 243 participates in substrate binding. Position 246 (lysine 246) interacts with phosphate. Arginine 269 is a binding site for substrate. Histidine 276 serves as the catalytic Proton acceptor. Glutamine 352 is an NADP(+) binding site.

This sequence belongs to the aspartate-semialdehyde dehydrogenase family. In terms of assembly, homodimer.

The catalysed reaction is L-aspartate 4-semialdehyde + phosphate + NADP(+) = 4-phospho-L-aspartate + NADPH + H(+). Its pathway is amino-acid biosynthesis; L-lysine biosynthesis via DAP pathway; (S)-tetrahydrodipicolinate from L-aspartate: step 2/4. The protein operates within amino-acid biosynthesis; L-methionine biosynthesis via de novo pathway; L-homoserine from L-aspartate: step 2/3. It participates in amino-acid biosynthesis; L-threonine biosynthesis; L-threonine from L-aspartate: step 2/5. Catalyzes the NADPH-dependent formation of L-aspartate-semialdehyde (L-ASA) by the reductive dephosphorylation of L-aspartyl-4-phosphate. The polypeptide is Aspartate-semialdehyde dehydrogenase (Buchnera aphidicola subsp. Schizaphis graminum (strain Sg)).